Here is a 192-residue protein sequence, read N- to C-terminus: Endoribonuclease YbeY (192 aa).

Zn(2+) contacts are provided by H109, H113, and H119. Residues 142–192 (VGAALREGGPARAAETETSWTRSPTSTSTRSPSGSTARGTRARSSRAGSGR) are disordered. The segment covering 159 to 180 (TSWTRSPTSTSTRSPSGSTARG) has biased composition (low complexity).

The protein belongs to the endoribonuclease YbeY family. It depends on Zn(2+) as a cofactor.

It localises to the cytoplasm. Functionally, single strand-specific metallo-endoribonuclease involved in late-stage 70S ribosome quality control and in maturation of the 3' terminus of the 16S rRNA. The chain is Endoribonuclease YbeY from Anaeromyxobacter sp. (strain Fw109-5).